A 738-amino-acid chain; its full sequence is Wall-associated receptor kinase 4 (738 aa).

Residues 1–22 (MKVQRLFLVAIFCLSYMQLVKG) form the signal peptide. At 23-335 (QTLPRCPEKC…PKGNPEYVEW (313 aa)) the chain is on the extracellular side. N-linked (GlcNAc...) asparagine glycosylation is found at Asn34, Asn56, Asn109, Asn115, Asn132, Asn182, and Asn208. An EGF-like 1 domain is found at 232 to 278 (RGETCGQVGEKKCGVNGICSNSASGIGYTCKCKGGFQGNPYLQNGCQ). 6 disulfide bridges follow: Cys236-Cys250, Cys244-Cys261, Cys263-Cys277, Cys283-Cys300, Cys294-Cys309, and Cys311-Cys324. The region spanning 279–325 (DINECTTANPIHKHNCSGDSTCENKLGHFRCNCRSRYELNTTTNTCK) is the EGF-like 2; calcium-binding domain. Residue Asn293 is glycosylated (N-linked (GlcNAc...) asparagine). An N-linked (GlcNAc...) asparagine glycan is attached at Asn318. The helical transmembrane segment at 336–356 (TTIVLGTTIGFLVILLAISCI) threads the bilayer. Over 357–738 (EHKMKNTKDT…VAILDIEAGR (382 aa)) the chain is Cytoplasmic. Phosphothreonine is present on Thr399. Residues 410-693 (YDENRILGQG…RVTKTKHKWS (284 aa)) form the Protein kinase domain. ATP is bound by residues 416–424 (LGQGGQGTV) and Lys438. Tyr483 bears the Phosphotyrosine mark. Asp535 functions as the Proton acceptor in the catalytic mechanism. Phosphothreonine is present on residues Thr569 and Thr574. Tyr582 carries the post-translational modification Phosphotyrosine.

The protein belongs to the protein kinase superfamily. Ser/Thr protein kinase family. In terms of tissue distribution, strictly expressed in siliques.

The protein resides in the membrane. It carries out the reaction L-seryl-[protein] + ATP = O-phospho-L-seryl-[protein] + ADP + H(+). The catalysed reaction is L-threonyl-[protein] + ATP = O-phospho-L-threonyl-[protein] + ADP + H(+). Serine/threonine-protein kinase that may function as a signaling receptor of extracellular matrix component. Binding to pectin may have significance in the control of cell expansion, morphogenesis and development. The chain is Wall-associated receptor kinase 4 (WAK4) from Arabidopsis thaliana (Mouse-ear cress).